The chain runs to 137 residues: Diacylglycerol kinase (137 aa).

Glu42 provides a ligand contact to a divalent metal cation. Transmembrane regions (helical) follow at residues 49–67 (LIAF…ATFF) and 73–89 (AILF…NTAI). The Proton acceptor role is filled by Glu83. Residue Glu90 coordinates a divalent metal cation. A helical membrane pass occupies residues 112 to 132 (SFACLCLIVANGVYAAYVVIF).

Belongs to the bacterial diacylglycerol kinase family. It depends on Mg(2+) as a cofactor.

It localises to the cell inner membrane. It carries out the reaction a 1,2-diacyl-sn-glycerol + ATP = a 1,2-diacyl-sn-glycero-3-phosphate + ADP + H(+). Catalyzes the ATP-dependent phosphorylation of sn-l,2-diacylglycerol (DAG) to phosphatidic acid. Involved in the recycling of diacylglycerol produced as a by-product during membrane-derived oligosaccharide (MDO) biosynthesis. The chain is Diacylglycerol kinase (dgkA) from Sinorhizobium sp.